Reading from the N-terminus, the 304-residue chain is Glutaminase (304 aa).

Residues Ser63, Asn114, Glu158, Asn165, Tyr189, Tyr240, and Val258 each coordinate substrate.

Belongs to the glutaminase family. Homotetramer.

It catalyses the reaction L-glutamine + H2O = L-glutamate + NH4(+). The chain is Glutaminase from Shewanella sp. (strain ANA-3).